The sequence spans 435 residues: Serine--tRNA ligase (435 aa).

241-243 contacts L-serine; the sequence is TAE. Residue 272 to 274 coordinates ATP; sequence RSE. Position 295 (Glu-295) interacts with L-serine. Position 359-362 (359-362) interacts with ATP; the sequence is EISS. Ser-395 contributes to the L-serine binding site.

Belongs to the class-II aminoacyl-tRNA synthetase family. Type-1 seryl-tRNA synthetase subfamily. As to quaternary structure, homodimer. The tRNA molecule binds across the dimer.

It is found in the cytoplasm. The catalysed reaction is tRNA(Ser) + L-serine + ATP = L-seryl-tRNA(Ser) + AMP + diphosphate + H(+). It catalyses the reaction tRNA(Sec) + L-serine + ATP = L-seryl-tRNA(Sec) + AMP + diphosphate + H(+). The protein operates within aminoacyl-tRNA biosynthesis; selenocysteinyl-tRNA(Sec) biosynthesis; L-seryl-tRNA(Sec) from L-serine and tRNA(Sec): step 1/1. Catalyzes the attachment of serine to tRNA(Ser). Is also able to aminoacylate tRNA(Sec) with serine, to form the misacylated tRNA L-seryl-tRNA(Sec), which will be further converted into selenocysteinyl-tRNA(Sec). The sequence is that of Serine--tRNA ligase from Actinobacillus pleuropneumoniae serotype 5b (strain L20).